Here is a 632-residue protein sequence, read N- to C-terminus: tRNA uridine 5-carboxymethylaminomethyl modification enzyme MnmG (632 aa).

FAD is bound by residues 15 to 20, Ile-127, and Ser-182; that span reads GAGHAG. 276-290 lines the NAD(+) pocket; the sequence is GPRYCPSIEDKIVRF. Gln-373 lines the FAD pocket.

It belongs to the MnmG family. Homodimer. Heterotetramer of two MnmE and two MnmG subunits. FAD is required as a cofactor.

Its subcellular location is the cytoplasm. In terms of biological role, NAD-binding protein involved in the addition of a carboxymethylaminomethyl (cmnm) group at the wobble position (U34) of certain tRNAs, forming tRNA-cmnm(5)s(2)U34. In Streptococcus pyogenes serotype M4 (strain MGAS10750), this protein is tRNA uridine 5-carboxymethylaminomethyl modification enzyme MnmG.